Consider the following 757-residue polypeptide: Probable serine/threonine-protein kinase pknA2 (757 aa).

The region spanning 14-274 (YRIVRNIAEG…DGAAAAEELS (261 aa)) is the Protein kinase domain. ATP contacts are provided by residues 20-28 (IAEGGMATV) and lysine 43. Aspartate 140 functions as the Proton acceptor in the catalytic mechanism. The tract at residues 344–387 (DTGGAADVNPPAPPVAPTTALDSSTPADASAPHKTQIMAQSGSE) is disordered. PASTA domains are found at residues 466 to 539 (DANA…VVSK), 545 to 614 (TIPK…TLSK), and 615 to 681 (GPMP…VISK).

Belongs to the protein kinase superfamily. Ser/Thr protein kinase family.

The catalysed reaction is L-seryl-[protein] + ATP = O-phospho-L-seryl-[protein] + ADP + H(+). It catalyses the reaction L-threonyl-[protein] + ATP = O-phospho-L-threonyl-[protein] + ADP + H(+). This Bifidobacterium longum (strain NCC 2705) protein is Probable serine/threonine-protein kinase pknA2 (pknA2).